The following is a 715-amino-acid chain: MDTSSKENAHLFHKNSAQPAGGPSFTVGYPSTEEARPCCGKLKVFLGALSFVYFAKALAEGYLKSTVTQIERRFEIPSSLVGIIDGSFEIGNLLVITFVSYFGAKLHRPKIIGAGCLVMGFGTMLIAVPQFFMEKYSYEKYERYSPSSNVTPSISPCYLESSSPSPSSILGKSQNKISHECVGDSSSSMWVYVFLGNLLRGLGETPIQPLGIAYLDDFASEDNAAFYIGCVQTVAIIGPIFGFLLGSLCAKLYVDIGFVNLDHITITPKDPQWVGAWWLGYLIAGFLSLLAAVPFWCLPKTLPRSQSRENSGSTSEKSKFIDDPIHYQMAPGDDKMKIMEMAKDFLPSLKTLFRNPVYILYLCASTVQFNSLFGMVTYKPKYIEQQYGQSSSKANFVIGLINIPAVALGIFSGGIVMKKFRLGICEATKLYLGSSVFGYLLFLSLFALGCENSSVAGLTVSYQGTKPVSYHERALFSDCNSRCKCSDSKWEPMCGDNGITYVSACLAGCQSSSRSGKNIIFSNCTCVGFAAPKSGNWSGMMGRCQKDNGCSQMFLYFLVISVITSYTLSLGGIPGYILLLRCIQPQLKSFALGIYTLAVRVLAGIPAPVYFGVLIDTSCLKWGFKKCGSRGSCRLYDSHAFRHIYLGLTTLLGTVSVFLSMAVLFVLKKKYVSKHSSLITTREKIGMSSSIKKETCAARDRGLQPKYWPGKETRL.

Residues M1 to K43 lie on the Cytoplasmic side of the membrane. Residues V44–L63 traverse the membrane as a helical segment. The Extracellular segment spans residues K64–G82. A helical membrane pass occupies residues I83–G103. Topologically, residues A104–P109 are cytoplasmic. Residues K110–E134 form a helical membrane-spanning segment. At K135–S187 the chain is on the extracellular side. Residues S188–D216 form a helical membrane-spanning segment. Topologically, residues D217–A235 are cytoplasmic. A helical membrane pass occupies residues I236–I256. Residues G257–V274 lie on the Extracellular side of the membrane. The chain crosses the membrane as a helical span at residues G275–P299. At K300 to T351 the chain is on the cytoplasmic side. A helical membrane pass occupies residues L352–F373. Residues G374–K393 lie on the Extracellular side of the membrane. A helical transmembrane segment spans residues A394–M417. Residues K418–R421 lie on the Cytoplasmic side of the membrane. Residues L422–L445 traverse the membrane as a helical segment. Over F446 to F557 the chain is Extracellular. N-linked (GlcNAc...) asparagine glycosylation occurs at N452. A Kazal-like domain is found at R473–G528. Cystine bridges form between C479–C509, C485–C505, and C494–C526. N-linked (GlcNAc...) asparagine glycans are attached at residues N523 and N536. Residues L558–L580 form a helical membrane-spanning segment. Residues R581–S589 are Cytoplasmic-facing. Residues F590–I615 traverse the membrane as a helical segment. The Extracellular portion of the chain corresponds to D616–T649. Residues T650–L667 form a helical membrane-spanning segment. The Cytoplasmic segment spans residues K668 to L715.

This sequence belongs to the organo anion transporter (TC 2.A.60) family. In terms of tissue distribution, widely expressed throughout the brain except in the cerebellum. Not detected in kidney, heart, lung, skeletal muscle, spleen, liver, nor testis. Highly expressed in cerebral microvessels throughout the brain and in the choroid plexus (at mRNA and protein level).

The protein resides in the cell membrane. It catalyses the reaction 3,3',5'-triiodo-L-thyronine(out) = 3,3',5'-triiodo-L-thyronine(in). It carries out the reaction L-thyroxine(out) = L-thyroxine(in). The enzyme catalyses L-thyroxine sulfate(out) = L-thyroxine sulfate(in). The catalysed reaction is 17beta-estradiol 17-O-(beta-D-glucuronate)(out) = 17beta-estradiol 17-O-(beta-D-glucuronate)(in). It catalyses the reaction 3,3',5-triiodo-L-thyronine(out) = 3,3',5-triiodo-L-thyronine(in). Its function is as follows. Mediates the Na(+)-independent high affinity transport of thyroid hormones at the plasma membrane of brain capillary endothelial cells. The transport activity of substrates L-thyroxine (T4) and 3,3',5'-triiodo-L-thyronine (reverse T3, rT3) is much greater than that of 3,3',5-triiodo-L-thyronine (T3). The prehormone, T4, is the major form in the circulating blood and is converted to the active form, T3, by the iodothyronine-deiodinase in peripheral organs. T3 plays an essential role in brain development via binding to specific nuclear receptors (thyroid hormone receptor). Also transports organic anions such as the conjugated steroid 17-beta-glucuronosyl estradiol (17beta-estradiol 17-O-(beta-D-glucuronate)). Transports T4 and estrone-3-sulfate in a pH-insensitive manner. May serve as a drug efflux system at the blood brain barrier. The polypeptide is Solute carrier organic anion transporter family member 1C1 (Slco1c1) (Mus musculus (Mouse)).